A 178-amino-acid chain; its full sequence is Hypoxanthine-guanine phosphoribosyltransferase (178 aa).

Residues Lys46 and Gly47 each coordinate diphosphate. Asp103 provides a ligand contact to Mg(2+). Residue Asp106 is the Proton acceptor of the active site. GMP-binding positions include Lys134, 155–156 (FL), and Asp162. Residue Arg168 coordinates diphosphate.

The protein belongs to the purine/pyrimidine phosphoribosyltransferase family. Mg(2+) is required as a cofactor.

The protein localises to the cytoplasm. The catalysed reaction is IMP + diphosphate = hypoxanthine + 5-phospho-alpha-D-ribose 1-diphosphate. The enzyme catalyses GMP + diphosphate = guanine + 5-phospho-alpha-D-ribose 1-diphosphate. The protein operates within purine metabolism; IMP biosynthesis via salvage pathway; IMP from hypoxanthine: step 1/1. It participates in purine metabolism; GMP biosynthesis via salvage pathway; GMP from guanine: step 1/1. Functionally, purine salvage pathway enzyme that catalyzes the transfer of the ribosyl-5-phosphate group from 5-phospho-alpha-D-ribose 1-diphosphate (PRPP) to the N9 position of the 6-oxopurines hypoxanthine and guanine to form the corresponding ribonucleotides IMP (inosine 5'-monophosphate) and GMP (guanosine 5'-monophosphate), with the release of PPi. This Aquifex aeolicus (strain VF5) protein is Hypoxanthine-guanine phosphoribosyltransferase (hpt).